The primary structure comprises 193 residues: Pyridoxal 5'-phosphate synthase subunit PdxT (193 aa).

48-50 (GES) is an L-glutamine binding site. The Nucleophile role is filled by Cys80. Residues Arg107 and 136–137 (IR) each bind L-glutamine. Catalysis depends on charge relay system residues His172 and Glu174.

Belongs to the glutaminase PdxT/SNO family. In terms of assembly, in the presence of PdxS, forms a dodecamer of heterodimers. Only shows activity in the heterodimer.

It carries out the reaction aldehydo-D-ribose 5-phosphate + D-glyceraldehyde 3-phosphate + L-glutamine = pyridoxal 5'-phosphate + L-glutamate + phosphate + 3 H2O + H(+). The catalysed reaction is L-glutamine + H2O = L-glutamate + NH4(+). It participates in cofactor biosynthesis; pyridoxal 5'-phosphate biosynthesis. Catalyzes the hydrolysis of glutamine to glutamate and ammonia as part of the biosynthesis of pyridoxal 5'-phosphate. The resulting ammonia molecule is channeled to the active site of PdxS. The sequence is that of Pyridoxal 5'-phosphate synthase subunit PdxT from Clostridium botulinum (strain Loch Maree / Type A3).